A 425-amino-acid polypeptide reads, in one-letter code: 3-phosphoshikimate 1-carboxyvinyltransferase (425 aa).

3 residues coordinate 3-phosphoshikimate: K22, S23, and R27. A phosphoenolpyruvate-binding site is contributed by K22. Positions 95 and 123 each coordinate phosphoenolpyruvate. Residues S169, S170, Q171, S197, D313, N336, and K340 each contribute to the 3-phosphoshikimate site. Q171 is a phosphoenolpyruvate binding site. D313 (proton acceptor) is an active-site residue. Phosphoenolpyruvate-binding residues include R344, R386, and K411.

The protein belongs to the EPSP synthase family. As to quaternary structure, monomer.

The protein resides in the cytoplasm. It carries out the reaction 3-phosphoshikimate + phosphoenolpyruvate = 5-O-(1-carboxyvinyl)-3-phosphoshikimate + phosphate. It functions in the pathway metabolic intermediate biosynthesis; chorismate biosynthesis; chorismate from D-erythrose 4-phosphate and phosphoenolpyruvate: step 6/7. Its function is as follows. Catalyzes the transfer of the enolpyruvyl moiety of phosphoenolpyruvate (PEP) to the 5-hydroxyl of shikimate-3-phosphate (S3P) to produce enolpyruvyl shikimate-3-phosphate and inorganic phosphate. The chain is 3-phosphoshikimate 1-carboxyvinyltransferase from Marinomonas sp. (strain MWYL1).